We begin with the raw amino-acid sequence, 774 residues long: Fatty acid oxidation complex subunit alpha (774 aa).

Disordered regions lie at residues 1–31 and 617–641; these read MSKE…VGAS and YLYS…RNSF. The segment at 1–224 is enoyl-CoA hydratase; it reads MSKENIVTRE…KMGLVDDVVP (224 aa). Composition is skewed to polar residues over residues 8–31 and 620–637; these read TREN…VGAS and SNPT…SPAK. Positions 340 to 774 are 3-hydroxyacyl-CoA dehydrogenase; the sequence is RAIHRVGVLG…NIDEVTDVAS (435 aa).

The protein in the N-terminal section; belongs to the enoyl-CoA hydratase/isomerase family. This sequence in the central section; belongs to the 3-hydroxyacyl-CoA dehydrogenase family. Heterotetramer of two alpha chains (FadJ) and two beta chains (FadI).

It is found in the cytoplasm. The catalysed reaction is a (3S)-3-hydroxyacyl-CoA = a (2E)-enoyl-CoA + H2O. It carries out the reaction a 4-saturated-(3S)-3-hydroxyacyl-CoA = a (3E)-enoyl-CoA + H2O. It catalyses the reaction a (3S)-3-hydroxyacyl-CoA + NAD(+) = a 3-oxoacyl-CoA + NADH + H(+). The enzyme catalyses (3S)-3-hydroxybutanoyl-CoA = (3R)-3-hydroxybutanoyl-CoA. It participates in lipid metabolism; fatty acid beta-oxidation. In terms of biological role, catalyzes the formation of a hydroxyacyl-CoA by addition of water on enoyl-CoA. Also exhibits 3-hydroxyacyl-CoA epimerase and 3-hydroxyacyl-CoA dehydrogenase activities. The sequence is that of Fatty acid oxidation complex subunit alpha from Yersinia pestis (strain Pestoides F).